Here is a 258-residue protein sequence, read N- to C-terminus: Small ribosomal subunit protein uS2 (258 aa).

Belongs to the universal ribosomal protein uS2 family.

In Streptococcus suis (strain 98HAH33), this protein is Small ribosomal subunit protein uS2.